The sequence spans 450 residues: Glucose-6-phosphate isomerase (450 aa).

Thr39 carries the phosphothreonine modification. The active-site Proton donor is the Glu291. Active-site residues include His312 and Lys426.

This sequence belongs to the GPI family.

The protein localises to the cytoplasm. It catalyses the reaction alpha-D-glucose 6-phosphate = beta-D-fructose 6-phosphate. It functions in the pathway carbohydrate biosynthesis; gluconeogenesis. The protein operates within carbohydrate degradation; glycolysis; D-glyceraldehyde 3-phosphate and glycerone phosphate from D-glucose: step 2/4. Its function is as follows. Catalyzes the reversible isomerization of glucose-6-phosphate to fructose-6-phosphate. In Bacillus cytotoxicus (strain DSM 22905 / CIP 110041 / 391-98 / NVH 391-98), this protein is Glucose-6-phosphate isomerase.